Consider the following 904-residue polypeptide: Alanine--tRNA ligase (904 aa).

Residues His-600, His-604, Cys-704, and His-708 each coordinate Zn(2+).

Belongs to the class-II aminoacyl-tRNA synthetase family. Zn(2+) serves as cofactor.

It localises to the cytoplasm. The catalysed reaction is tRNA(Ala) + L-alanine + ATP = L-alanyl-tRNA(Ala) + AMP + diphosphate. Its function is as follows. Catalyzes the attachment of alanine to tRNA(Ala) in a two-step reaction: alanine is first activated by ATP to form Ala-AMP and then transferred to the acceptor end of tRNA(Ala). Also edits incorrectly charged Ser-tRNA(Ala) and Gly-tRNA(Ala) via its editing domain. The protein is Alanine--tRNA ligase of Metallosphaera sedula (strain ATCC 51363 / DSM 5348 / JCM 9185 / NBRC 15509 / TH2).